We begin with the raw amino-acid sequence, 542 residues long: Probable myosin-binding protein 6 (542 aa).

The first 21 residues, 1–21 (MYIQLLCFFLFLFLLLQATMS), serve as a signal peptide directing secretion. A helical transmembrane segment spans residues 39–59 (FLIYTVLEWSLIVFLFIDGVI). The tract at residues 219-239 (SFLAPAPSPRVSHNKLSENES) is disordered. The GTD-binding domain occupies 300–398 (SILNQLKKEV…ELEAEFEVYR (99 aa)). The segment at 419–480 (GNASAYDDCQ…DEEKGSESKE (62 aa)) is disordered. Residues 437–456 (AVSSSNQQENGENIDQNGQS) show a composition bias toward polar residues. The segment covering 471-480 (DEEKGSESKE) has biased composition (basic and acidic residues).

The protein localises to the membrane. In terms of biological role, probable membrane-anchored myosin receptors. In Arabidopsis thaliana (Mouse-ear cress), this protein is Probable myosin-binding protein 6.